The primary structure comprises 320 residues: MIKKIGVLTSGGDAPGMNAAIRGVVRTALGAGLEVFGIYDGYQGLYEDRIKQLDRSSVSDVINRGGTFLGSARFPQFREVEVREKAIENLKKHGIEALVVIGGDGSYMGAKKLTEMGFPCIGLPGTIDNDIAGTDYTIGYLTALNTVIEAIDRLRDTSSSHQRISIVEIMGRHCGDLTLTSAIAGGCEYIITPETGLNMEQLISNIKDGIAKGKKHAIIALTELMMDANKLAKEIESATGRETRATVLGHIQRGGKPTAFDRVLASRMGNYAVHLLMEGHGGRCVGIQKEQLVHHDIIDAIENMKRPVRTDLYKVAEELF.

Residue Gly12 participates in ATP binding. 22 to 26 (RGVVR) lines the ADP pocket. Residues 73–74 (RF) and 103–106 (GDGS) contribute to the ATP site. Asp104 provides a ligand contact to Mg(2+). Position 126–128 (126–128 (TID)) interacts with substrate. The active-site Proton acceptor is the Asp128. ADP is bound at residue Arg155. Substrate contacts are provided by residues Arg163 and 170–172 (MGR). Residues 186 to 188 (GCE), Lys212, and 214 to 216 (KKH) contribute to the ADP site. Residues Glu223, Arg244, and 250-253 (HIQR) each bind substrate.

It belongs to the phosphofructokinase type A (PFKA) family. ATP-dependent PFK group I subfamily. Prokaryotic clade 'B1' sub-subfamily. Homotetramer. Requires Mg(2+) as cofactor.

The protein localises to the cytoplasm. The catalysed reaction is beta-D-fructose 6-phosphate + ATP = beta-D-fructose 1,6-bisphosphate + ADP + H(+). Its pathway is carbohydrate degradation; glycolysis; D-glyceraldehyde 3-phosphate and glycerone phosphate from D-glucose: step 3/4. Its activity is regulated as follows. Allosterically activated by ADP and other diphosphonucleosides, and allosterically inhibited by phosphoenolpyruvate. Functionally, catalyzes the phosphorylation of D-fructose 6-phosphate to fructose 1,6-bisphosphate by ATP, the first committing step of glycolysis. The polypeptide is ATP-dependent 6-phosphofructokinase (Vibrio cholerae serotype O1 (strain ATCC 39315 / El Tor Inaba N16961)).